The sequence spans 839 residues: Small conductance calcium-activated potassium channel protein 2 (839 aa).

Disordered stretches follow at residues 1 to 33 (MPIVLVRPTNRTRRLDSTGAGMGPSSHQQQESP), 64 to 115 (QRGF…QQPG), 195 to 258 (ALRQ…RRES), and 280 to 375 (SNLS…KKNQ). Low complexity-rich tracts occupy residues 198–212 (QQYAQQPASASQYHQ) and 219–235 (ATSPTGSLGSLGSGPPL). Over residues 236-253 (SHHHHHPHPAHHQHHQPQ) the composition is skewed to basic residues. Residues 313-326 (SSPSAAAAASSSAP) are compositionally biased toward low complexity. The span at 345 to 363 (GTGGGGSTGGGGGGSGHGS) shows a compositional bias: gly residues. A helical membrane pass occupies residues 398 to 418 (ALIFGMFGIVVMVIETELSWG). The residue at position 420 (Tyr-420) is a Phosphotyrosine. The helical transmembrane segment at 428-448 (LALKCLISLSTIILLGLIIVY) threads the bilayer. The chain crosses the membrane as a helical span at residues 474–494 (IFFICLEILVCAIHPIPGNYT). Residues 516 to 536 (IILSIPMFLRLYLIARVMLLH) traverse the membrane as a helical segment. The chain crosses the membrane as a helical span at residues 565 to 585 (LMTICPGTVLLVFSISLWIIA). Positions 605-625 (FLGAMWLISITFLSIGYGDMV) form an intramembrane region, pore-forming. A helical transmembrane segment spans residues 634–654 (VCLLTGIMGAGCTALVVAVVA). The calmodulin-binding stretch occupies residues 672–748 (DTQLTKRVKN…LVDLAKTQNI (77 aa)). The span at 810–819 (HVSYNAERSR) shows a compositional bias: basic and acidic residues. A disordered region spans residues 810–839 (HVSYNAERSRSSSRRRRSSSTAPPTSSESS). Low complexity predominate over residues 828-839 (SSTAPPTSSESS).

This sequence belongs to the potassium channel KCNN family. KCa2.2/KCNN2 subfamily. As to quaternary structure, homodimer. Heteromultimer with KCNN1 and KCNN3. The complex is composed of 4 channel subunits each of which binds to a calmodulin subunit which regulates the channel activity through calcium-binding. Interacts (via N-terminal domain) with MPP2. In terms of tissue distribution, expressed in atrial and ventricular myocytes with higher levels in atrial myocytes (at protein level). Highly expressed in brain, liver and colon with low levels in kidney and testis. In colon, detected in smooth muscle cells.

It is found in the membrane. The protein resides in the cytoplasm. It localises to the myofibril. Its subcellular location is the sarcomere. The protein localises to the z line. It carries out the reaction K(+)(in) = K(+)(out). Its activity is regulated as follows. Inhibited by bee venom neurotoxin apamin. Inhibited by UCL 1684 and tetraethylammonium (TEA). In terms of biological role, small conductance calcium-activated potassium channel that mediates the voltage-independent transmembrane transfer of potassium across the cell membrane through a constitutive interaction with calmodulin which binds the intracellular calcium allowing its opening. The current is characterized by a voltage-independent activation, an intracellular calcium concentration increase-dependent activation and a single-channel conductance of about 3 picosiemens. Also presents an inwardly rectifying current, thus reducing its already small outward conductance of potassium ions, which is particularly the case when the membrane potential displays positive values, above + 20 mV. The inward rectification could be due to a blockade of the outward current by intracellular divalent cations such as calcium and magnesium and could also be due to an intrinsic property of the channel pore, independent of intracellular divalent ions. There are three positively charged amino acids in the S6 transmembrane domain, close to the pore, that collectively control the conductance and rectification through an electrostatic mechanism. Additionally, electrostatic contributions from these residues also play an important role in determining the intrinsic open probability of the channel in the absence of calcium, affecting the apparent calcium affinity for activation. Forms an heteromeric complex with calmodulin, which is constitutively associated in a calcium-independent manner. Channel opening is triggered when calcium binds the calmodulin resulting in a rotary movement leading to the formation of the dimeric complex to open the gate. Plays a role in the repolarization phase of cardiac action potential. In Mus musculus (Mouse), this protein is Small conductance calcium-activated potassium channel protein 2.